We begin with the raw amino-acid sequence, 257 residues long: Putative B3 domain-containing protein At2g27410 (257 aa).

A disordered region spans residues 5-50 (ARTTKINHFRGTSTTQNPNRGLEPSPSSYVTRRSKEKRPINVEKRS). A compositionally biased stretch (polar residues) spans 8-35 (TKINHFRGTSTTQNPNRGLEPSPSSYVT). A DNA-binding region (TF-B3) is located at residues 115–209 (TPDFLTEDET…KLCFALTPKN (95 aa)). Residues 212 to 257 (RGNSLPGGDGASTSGESGQVPLPIPPARYSSNSGQGCSGESSSSSS) form a disordered region. Residues 241–257 (SSNSGQGCSGESSSSSS) show a composition bias toward low complexity.

The protein localises to the nucleus. The chain is Putative B3 domain-containing protein At2g27410 from Arabidopsis thaliana (Mouse-ear cress).